The chain runs to 250 residues: MIAWLDPQDPFPPVEHALGPDSEAPGLLAASRELSPQRLLLAYRQGIFPWYSSGQPVLWWSTDPRMVLAPPALRVSVNLRKTLRRVLRDADWEIRVDHDFLAVMRACASTPREGQDGTWITDAIIAAYGALHRNGLAHSVESWYRGERVGGLYGVALGRMFFGESMFAHRTDASKIALAALCAFLGNHGVAMIDCQQETDHLASLGARPIPRAEFVAHVRAATAQPAISPWRFDKSVLERWAGTPAAPAA.

It belongs to the L/F-transferase family.

The protein resides in the cytoplasm. It carries out the reaction N-terminal L-lysyl-[protein] + L-leucyl-tRNA(Leu) = N-terminal L-leucyl-L-lysyl-[protein] + tRNA(Leu) + H(+). The catalysed reaction is N-terminal L-arginyl-[protein] + L-leucyl-tRNA(Leu) = N-terminal L-leucyl-L-arginyl-[protein] + tRNA(Leu) + H(+). It catalyses the reaction L-phenylalanyl-tRNA(Phe) + an N-terminal L-alpha-aminoacyl-[protein] = an N-terminal L-phenylalanyl-L-alpha-aminoacyl-[protein] + tRNA(Phe). Functionally, functions in the N-end rule pathway of protein degradation where it conjugates Leu, Phe and, less efficiently, Met from aminoacyl-tRNAs to the N-termini of proteins containing an N-terminal arginine or lysine. This chain is Leucyl/phenylalanyl-tRNA--protein transferase, found in Cupriavidus taiwanensis (strain DSM 17343 / BCRC 17206 / CCUG 44338 / CIP 107171 / LMG 19424 / R1) (Ralstonia taiwanensis (strain LMG 19424)).